Reading from the N-terminus, the 468-residue chain is Elongation factor 1-alpha (468 aa).

A tr-type G domain is found at 6 to 244 (KPHINIVVIG…DNIPLPARPS (239 aa)). The G1 stretch occupies residues 15-22 (GHVDSGKS). 15–22 (GHVDSGKS) contributes to the GTP binding site. The segment at 71–75 (GITID) is G2. The segment at 92 to 95 (DAPG) is G3. GTP-binding positions include 92-96 (DAPGH) and 154-157 (NKID). Positions 154-157 (NKID) are G4. A G5 region spans residues 195 to 197 (SGW). 2 positions are modified to 5-glutamyl glycerylphosphorylethanolamine: Glu-303 and Glu-376.

The protein belongs to the TRAFAC class translation factor GTPase superfamily. Classic translation factor GTPase family. EF-Tu/EF-1A subfamily.

Its subcellular location is the cytoplasm. Functionally, this protein promotes the GTP-dependent binding of aminoacyl-tRNA to the A-site of ribosomes during protein biosynthesis. This is Elongation factor 1-alpha from Hydra vulgaris (Hydra).